The chain runs to 208 residues: Large ribosomal subunit protein bL25 (208 aa).

Positions 185–195 (DLEEETGEAEG) are enriched in acidic residues. The interval 185 to 208 (DLEEETGEAEGETAAAPAEEGAES) is disordered. Residues 196-208 (ETAAAPAEEGAES) are compositionally biased toward low complexity.

The protein belongs to the bacterial ribosomal protein bL25 family. CTC subfamily. As to quaternary structure, part of the 50S ribosomal subunit; part of the 5S rRNA/L5/L18/L25 subcomplex. Contacts the 5S rRNA. Binds to the 5S rRNA independently of L5 and L18.

This is one of the proteins that binds to the 5S RNA in the ribosome where it forms part of the central protuberance. This is Large ribosomal subunit protein bL25 from Rhodococcus opacus (strain B4).